The sequence spans 418 residues: Gamma-glutamyl phosphate reductase (418 aa).

It belongs to the gamma-glutamyl phosphate reductase family.

It localises to the cytoplasm. It catalyses the reaction L-glutamate 5-semialdehyde + phosphate + NADP(+) = L-glutamyl 5-phosphate + NADPH + H(+). Its pathway is amino-acid biosynthesis; L-proline biosynthesis; L-glutamate 5-semialdehyde from L-glutamate: step 2/2. Its function is as follows. Catalyzes the NADPH-dependent reduction of L-glutamate 5-phosphate into L-glutamate 5-semialdehyde and phosphate. The product spontaneously undergoes cyclization to form 1-pyrroline-5-carboxylate. The protein is Gamma-glutamyl phosphate reductase of Desulfosudis oleivorans (strain DSM 6200 / JCM 39069 / Hxd3) (Desulfococcus oleovorans).